A 979-amino-acid chain; its full sequence is Receptor-type tyrosine-protein phosphatase-like N (979 aa).

The N-terminal stretch at 1–34 (MRLPGRPGGPGGSGGLRVLLCLLLLGSRPGGCNA) is a signal peptide. The interval 35 to 131 (ISAHGCLFDR…HPRDRSGLVP (97 aa)) is RESP18 homology domain. Residues 35–575 (ISAHGCLFDR…RPAHSTSPMR (541 aa)) lie on the Lumenal side of the membrane. A disulfide bond links C53 and C62. The segment covering 113 to 127 (IPRLRPPEPHPRDRS) has biased composition (basic and acidic residues). Disordered stretches follow at residues 113–171 (IPRL…GAGS), 248–272 (GSKGMFGAHPGHSYGDPPGPPPAQL), 285–332 (SQVP…EQPD), and 391–466 (EQVQ…STRP). Phosphoserine is present on residues S308 and S309. Positions 400 to 409 (EPPPPMPSLP) are enriched in pro residues. Positions 449–575 (SPLGQNQPTM…RPAHSTSPMR (127 aa)) are sufficient for dimerization of proICA512. A compositionally biased stretch (polar residues) spans 451–466 (LGQNQPTMAGQPSTRP). 2 N-linked (GlcNAc...) asparagine glycosylation sites follow: N506 and N524. Residues 576–600 (SVLLTLVALAGVAGLLVALAVALCV) form a helical membrane-spanning segment. The segment at 601–732 (RQHARQRDKE…PNTCATAQGE (132 aa)) is sufficient for dimerization of proICA512. Topologically, residues 601 to 979 (RQHARQRDKE…VNAILKALPQ (379 aa)) are cytoplasmic. Residues 643 to 680 (NRAEGPPEPSRVSSVSSQFSDAAQASPSSHSSTPSWCE) are disordered. The span at 652 to 677 (SRVSSVSSQFSDAAQASPSSHSSTPS) shows a compositional bias: low complexity. The Tyrosine-protein phosphatase domain maps to 709 to 969 (LAKEWQALCA…EFALTAVAEE (261 aa)). A Glycyl lysine isopeptide (Lys-Gly) (interchain with G-Cter in SUMO) cross-link involves residue K754.

This sequence belongs to the protein-tyrosine phosphatase family. Receptor class 8 subfamily. In terms of assembly, homodimer; shown for the unprocessed protein (proICA512) in the endoplasmic reticulum and resolved during protein maturation as ICA512-TMF seems to be predominantly monomeric in secretory granules; however, ICA512-CCF interacts with ICA512-TMF disrupting the ICA512-TMF:SNTB2 complex. The isolated lumenal RESP18 homology domain has been shown to form disulfide-linked homooligomers. Interacts (via cytoplasmic domain) with phosphorylated SNTB2; this protects PTPRN against cleavage by CAPN1 to produce ICA512-CCF. Dephosphorylation of SNTB2 upon insulin stimulation disrupts the interaction and results in PTPRN cleavage. Interacts with SNX19. ICA512-CCF interacts with PIAS4; in the nucleus. Interacts with STAT5B (phosphorylated); down-regulated by ICA512-CCF sumoylation; ICA512-CCF prevents STAT5B dephosphorylation; ICA512-CCF mediates interaction of STAT5B with PIAS4. Interacts (via RESP18 homology domain) with insulin and proinsulin. Interacts with PTPRN2, PTPRA and PTPRE. Post-translationally, N-glycosylated. In terms of processing, O-glycosylated. Subject to proteolytic cleavage at multiple sites. Subject to cleavage on a pair of basic residues. On exocytosis of secretory granules in pancreatic beta-cells ICA512-TMF is transiently inserted in the plasma-membrane and cleaved by mu-type calpain CPN1 to yield ICA512-CCF. Post-translationally, sumoylated at two sites including Lys-754. Sumoylation decreases interaction with STAT5. Detected in pituitary (at protein level).

The protein localises to the membrane. It localises to the cytoplasmic vesicle. Its subcellular location is the secretory vesicle membrane. It is found in the perikaryon. The protein resides in the cell projection. The protein localises to the axon. It localises to the synapse. Its subcellular location is the cell membrane. It is found in the endosome. The protein resides in the nucleus. Plays a role in vesicle-mediated secretory processes. Required for normal accumulation of secretory vesicles in hippocampus, pituitary and pancreatic islets. Required for the accumulation of normal levels of insulin-containing vesicles and preventing their degradation. Plays a role in insulin secretion in response to glucose stimuli. Required for normal accumulation of the neurotransmitters norepinephrine, dopamine and serotonin in the brain. In females, but not in males, required for normal accumulation and secretion of pituitary hormones, such as luteinizing hormone (LH) and follicle-stimulating hormone (FSH). Required to maintain normal levels of renin expression and renin release. Seems to lack intrinsic enzyme activity. May regulate catalytic active protein-tyrosine phosphatases such as PTPRA through dimerization. Functionally, ICA512-TMF regulates dynamics and exocytosis of insulin secretory granules (SGs); binding of ICA512-TMF to SNTB2/beta-2-syntrophin is proposed to restrain SGs mobility and exocytosis by tethering them to the actin cytoskeleton depending on UTRN; the function is inhibited by cytoplasmic ICA512-CFF dimerizing with ICA512-TMF and displacing SNTB2. In terms of biological role, ICA512-CCF translocated to the nucleus promotes expression of insulin and other granule-related genes; the function implicates binding to and regulating activity of STAT5B probably by preventing its dephosphorylation and potentially by inducing its sumoylation by recruiting PIAS4. Enhances pancreatic beta-cell proliferation by converging with signaling by STAT5B and STAT3. ICA512-CCF located in the cytoplasm regulates dynamics and exocytosis of insulin secretory granules (SGs) by dimerizing with ICA512-TMF and displacing SNTB2 thus enhancing SGs mobility and exocytosis. This chain is Receptor-type tyrosine-protein phosphatase-like N (PTPRN), found in Bos taurus (Bovine).